We begin with the raw amino-acid sequence, 911 residues long: Protein translocase subunit SecA (911 aa).

Residues Gln-86, 104–108 (GEGKT), and Asp-512 contribute to the ATP site. The interval 869–888 (ALADDGQPQGAQPVRNVLPK) is disordered. Residues Cys-895, Cys-897, Cys-906, and His-907 each contribute to the Zn(2+) site.

This sequence belongs to the SecA family. In terms of assembly, monomer and homodimer. Part of the essential Sec protein translocation apparatus which comprises SecA, SecYEG and auxiliary proteins SecDF-YajC and YidC. Requires Zn(2+) as cofactor.

It localises to the cell inner membrane. The protein resides in the cytoplasm. The catalysed reaction is ATP + H2O + cellular proteinSide 1 = ADP + phosphate + cellular proteinSide 2.. Its function is as follows. Part of the Sec protein translocase complex. Interacts with the SecYEG preprotein conducting channel. Has a central role in coupling the hydrolysis of ATP to the transfer of proteins into and across the cell membrane, serving both as a receptor for the preprotein-SecB complex and as an ATP-driven molecular motor driving the stepwise translocation of polypeptide chains across the membrane. The polypeptide is Protein translocase subunit SecA (Bordetella parapertussis (strain 12822 / ATCC BAA-587 / NCTC 13253)).